A 368-amino-acid chain; its full sequence is Phosphoserine aminotransferase (368 aa).

Residue Arg-44 participates in L-glutamate binding. Pyridoxal 5'-phosphate contacts are provided by residues 78–79 (AT), Trp-104, Thr-157, Asp-179, and Gln-202. Lys-203 is subject to N6-(pyridoxal phosphate)lysine. Pyridoxal 5'-phosphate is bound at residue 244 to 245 (NT).

Belongs to the class-V pyridoxal-phosphate-dependent aminotransferase family. SerC subfamily. As to quaternary structure, homodimer. The cofactor is pyridoxal 5'-phosphate.

The protein localises to the cytoplasm. It carries out the reaction O-phospho-L-serine + 2-oxoglutarate = 3-phosphooxypyruvate + L-glutamate. The catalysed reaction is 4-(phosphooxy)-L-threonine + 2-oxoglutarate = (R)-3-hydroxy-2-oxo-4-phosphooxybutanoate + L-glutamate. The protein operates within amino-acid biosynthesis; L-serine biosynthesis; L-serine from 3-phospho-D-glycerate: step 2/3. It functions in the pathway cofactor biosynthesis; pyridoxine 5'-phosphate biosynthesis; pyridoxine 5'-phosphate from D-erythrose 4-phosphate: step 3/5. In terms of biological role, catalyzes the reversible conversion of 3-phosphohydroxypyruvate to phosphoserine and of 3-hydroxy-2-oxo-4-phosphonooxybutanoate to phosphohydroxythreonine. The protein is Phosphoserine aminotransferase of Neisseria meningitidis serogroup B (strain ATCC BAA-335 / MC58).